Consider the following 192-residue polypeptide: NAD(P)H-quinone oxidoreductase subunit J, organellar chromatophore (192 aa).

This sequence belongs to the complex I 30 kDa subunit family. As to quaternary structure, NDH is composed of at least 16 different subunits, 5 of which are encoded in the nucleus.

The protein localises to the plastid. The protein resides in the organellar chromatophore thylakoid membrane. The catalysed reaction is a quinone + NADH + H(+) = a quinol + NAD(+). Functionally, NDH-1 shuttles electrons from NADH, via FMN and iron-sulfur (Fe-S) centers, to quinones in the respiratory chain. Couples the redox reaction to proton translocation (for every two electrons transferred, four hydrogen ions are translocated across the cytoplasmic membrane), and thus conserves the redox energy in a proton gradient. In Paulinella chromatophora, this protein is NAD(P)H-quinone oxidoreductase subunit J, organellar chromatophore.